Consider the following 507-residue polypeptide: Putative histone deacetylase 2 (507 aa).

The tract at residues 29–342 (RNVAYYYHKD…WALETGVILG (314 aa)) is histone deacetylase. Residue His-162 is part of the active site. The interval 444–507 (EECFVEEDSK…RKDLNIPGIP (64 aa)) is disordered. Basic and acidic residues predominate over residues 482-501 (SHSDVIEEAKYEDRDRRKDL).

It belongs to the histone deacetylase family. HD type 1 subfamily. In terms of assembly, may be a component of a histone deacetylase complex containing saeg-2, saeg-1 and hda-2.

The protein localises to the nucleus. The catalysed reaction is N(6)-acetyl-L-lysyl-[histone] + H2O = L-lysyl-[histone] + acetate. Probably responsible for the deacetylation of lysine residues on the N-terminal part of the core histones (H2A, H2B, H3 and H4). Histone deacetylation gives a tag for epigenetic repression and plays an important role in transcriptional regulation, cell cycle progression and developmental events. Histone deacetylases act via the formation of large multiprotein complexes. As a likely component of a histone deacetylase complex, together with saeg-1 and hda-2, functions downstream of the cAMP-dependent kinase egl-4 to regulate the expression of genes required for egg-laying and forgaging. This is Putative histone deacetylase 2 (hda-2) from Caenorhabditis elegans.